Here is a 158-residue protein sequence, read N- to C-terminus: RING-H2 finger protein ATL66 (158 aa).

The chain crosses the membrane as a helical span at residues 33 to 53; it reads LFFALALFSVVLFFALLTLYI. An RING-type; atypical zinc finger spans residues 107–149; it reads CCICLGGFEEGEKMKVLPPCSHCYHCECVDRWLKTESSCPLCR.

It belongs to the RING-type zinc finger family. ATL subfamily.

The protein resides in the membrane. The enzyme catalyses S-ubiquitinyl-[E2 ubiquitin-conjugating enzyme]-L-cysteine + [acceptor protein]-L-lysine = [E2 ubiquitin-conjugating enzyme]-L-cysteine + N(6)-ubiquitinyl-[acceptor protein]-L-lysine.. The protein operates within protein modification; protein ubiquitination. This is RING-H2 finger protein ATL66 (ATL66) from Arabidopsis thaliana (Mouse-ear cress).